Reading from the N-terminus, the 170-residue chain is 4-hydroxyphenylacetate 3-monooxygenase reductase component (170 aa).

Belongs to the non-flavoprotein flavin reductase family. HpaC subfamily. As to quaternary structure, homodimer. 4-HPA 3-monooxygenase consists of a reductase component HpaC and an oxygenase component HpaB.

It catalyses the reaction a reduced flavin + NAD(+) = an oxidized flavin + NADH + 2 H(+). It functions in the pathway aromatic compound metabolism; 4-hydroxyphenylacetate degradation; pyruvate and succinate semialdehyde from 4-hydroxyphenylacetate: step 1/7. Its function is as follows. Catalyzes the reduction of free flavins (FMN, FAD and riboflavin) by NADH. Subsequently, the reduced flavins diffuse to the large HpaB component or to other electron acceptors such as cytochrome c and Fe(3+) ion. The chain is 4-hydroxyphenylacetate 3-monooxygenase reductase component (hpaC) from Escherichia coli.